Consider the following 158-residue polypeptide: NAD(P)H-quinone oxidoreductase subunit J, chloroplastic (158 aa).

The protein belongs to the complex I 30 kDa subunit family. In terms of assembly, NDH is composed of at least 16 different subunits, 5 of which are encoded in the nucleus.

The protein resides in the plastid. It is found in the chloroplast thylakoid membrane. The enzyme catalyses a plastoquinone + NADH + (n+1) H(+)(in) = a plastoquinol + NAD(+) + n H(+)(out). The catalysed reaction is a plastoquinone + NADPH + (n+1) H(+)(in) = a plastoquinol + NADP(+) + n H(+)(out). Functionally, NDH shuttles electrons from NAD(P)H:plastoquinone, via FMN and iron-sulfur (Fe-S) centers, to quinones in the photosynthetic chain and possibly in a chloroplast respiratory chain. The immediate electron acceptor for the enzyme in this species is believed to be plastoquinone. Couples the redox reaction to proton translocation, and thus conserves the redox energy in a proton gradient. This Panax ginseng (Korean ginseng) protein is NAD(P)H-quinone oxidoreductase subunit J, chloroplastic.